We begin with the raw amino-acid sequence, 151 residues long: FAD synthase (151 aa).

ATP contacts are provided by residues 12–13 (TF), 17–20 (HPGH), Asp-97, and Tyr-125.

This sequence belongs to the archaeal FAD synthase family. Homodimer. A divalent metal cation serves as cofactor.

The catalysed reaction is FMN + ATP + H(+) = FAD + diphosphate. It functions in the pathway cofactor biosynthesis; FAD biosynthesis; FAD from FMN: step 1/1. In terms of biological role, catalyzes the transfer of the AMP portion of ATP to flavin mononucleotide (FMN) to produce flavin adenine dinucleotide (FAD) coenzyme. The polypeptide is FAD synthase (Methanocaldococcus sp. (strain FS406-22)).